The primary structure comprises 141 residues: Anthrone oxygenase ptaC (141 aa).

The signal sequence occupies residues 1–19; the sequence is MMGLPLMAVPMLLDTGADP. 2 helical membrane-spanning segments follow: residues 33–53 and 64–84; these read GVRTMPPLAITTFILYVWTII and ILAVAAVVTMGMIPFTWYVLA.

It belongs to the anthrone oxygenase family.

The protein resides in the membrane. It participates in secondary metabolite biosynthesis. In terms of biological role, anthrone oxygenase; part of the gene cluster that mediates the biosynthesis of pestheic acid, a diphenyl ether which is a biosynthetic precursor of the unique chloropupukeananes. The biosynthesis initiates from condensation of acetate and malonate units catalyzed by the non-reducing PKS ptaA. As the ptaA protein is TE/CLC domain-deficient, hydrolysis and Claisen cyclization of the polyketide could be catalyzed by ptaB containing a beta-lactamase domain. The ptaB protein might hydrolyze the thioester bond between the ACP of ptaA and the intermediate to release atrochrysone carboxylic acid, which is spontaneously dehydrated to form endocrocin anthrone. Endocrocin anthrone is then converted to endocrocin, catalyzed by the anthrone oxygenase ptaC. Spontaneous decarboxylation of endocrocin occurs to generate emodin. An O-methyltransferase (ptaH or ptaI) could methylate emodin to form physcion. PtaJ could then catalyze the oxidative cleavage of physcion, and rotation of the intermediate could then afford desmethylisosulochrin. PtaF, a putative NADH-dependent oxidoreductase, might also participate in the oxidative cleavage step. Desmethylisosulochrin is then transformed by another O-methyltransferase (ptaH or ptaI) to form isosulochrin. Chlorination of isosulochrin by ptaM in the cyclohexadienone B ring then produces chloroisosulochrin. PtaE is responsible for the oxidative coupling reactions of both benzophenones isosulochrin and chloroisosulochrin to RES-1214-1 and pestheic acid respectively, regardless of chlorination. This chain is Anthrone oxygenase ptaC, found in Pestalotiopsis fici (strain W106-1 / CGMCC3.15140).